Reading from the N-terminus, the 880-residue chain is Interference hedgehog (880 aa).

Positions 1–20 are cleaved as a signal peptide; it reads MTLLTSSLLLFSLLTSRLEA. The Extracellular segment spans residues 21–703; that stretch reads IPVLEKSPAH…ETFNMSPMLT (683 aa). Ig-like C2-type domains are found at residues 45–142, 155–232, 252–340, and 346–432; these read PGVR…TARL, PESP…ERIQ, PHLL…YIKV, and PQIV…LQVN. 4 disulfide bridges follow: C68-C126, C173-C220, C276-C324, and C367-C414. N-linked (GlcNAc...) asparagine glycosylation is found at N102 and N209. The segment at 429–467 is disordered; that stretch reads LQVNPKQIQEPRESGGTHRPNPNQGSKHKQMYPPTPPNV. Fibronectin type-III domains are found at residues 461-567 and 575-670; these read PPTP…LQPG and VPEL…TQRP. N-linked (GlcNAc...) asparagine glycosylation is present at N466. Heparin contacts are provided by R497, K501, K503, and R541. N557 carries an N-linked (GlcNAc...) asparagine glycan. Residues 662 to 692 are disordered; it reads LKQGRTQRPKTSTTEEPTLQMGDRDTTTPSH. Positions 665–678 are enriched in polar residues; that stretch reads GRTQRPKTSTTEEP. An N-linked (GlcNAc...) asparagine glycan is attached at N693. A helical transmembrane segment spans residues 704 to 724; sequence GTIGGGAVLILLLISTCLCVC. The Cytoplasmic portion of the chain corresponds to 725-880; sequence RRRNSRSRGN…SSGSLNSVGV (156 aa). 2 disordered regions span residues 728–762 and 775–880; these read NSRSRGNNPNKPRMAELRDDFVPLGNCSPTKQRQR and QQQQ…SVGV. Composition is skewed to low complexity over residues 823–837 and 864–880; these read RAGGSNGSNNGNNNN and SSRSENLSSGSLNSVGV.

It belongs to the immunoglobulin superfamily. IHOG family. As to quaternary structure, homodimer. Heterotetramer; 2 iHog chains bind 2 hh chains when facilitated by heparin, heparin is required to promote high-affinity interactions between hh and iHog.

It is found in the membrane. Mediates response to the active Hedgehog (Hh) protein signal in embryos, functioning upstream or at the level of patched (ptc). The chain is Interference hedgehog from Drosophila simulans (Fruit fly).